The following is a 668-amino-acid chain: WD repeat-containing protein 48 homolog (668 aa).

WD repeat units follow at residues 26 to 65 (QHRN…SEKY), 71 to 110 (HHND…CMST), 113 to 152 (THRD…ALTA), 164 to 203 (GSKD…RRMK), 206 to 245 (GHTE…CVQT), 248 to 287 (VHKE…NKTL), 290 to 329 (EEQA…RCTL), and 350 to 389 (KGGA…KKEQ). The segment at 592-616 (ETTPSGGNANNSLQNSQSDANSEGS) is disordered.

The protein belongs to the WD repeat WDR48 family. Catalytic component of the Usp12-46 deubiquitylase complex consisting of Usp12-46, Wdr20 and Uaf1; regulatory subunit that, together wtih Wdr20, stabilizes Usp12-46. The Usp12-46 deubiquitylase complex associates with arr/arrow; the interaction leads to deubiquitination and stabilization of arr/arrow.

Regulatory component of the Usp12-46 deubiquitylase complex. activates deubiquitination by increasing the catalytic turnover without increasing the affinity of deubiquitinating enzymes for the substrate. The complex deubiquitylates the wg/wingless-signaling receptor arr/arrow, which stabilizes the receptor and increases its concentration at the cell surface; this enhances the sensitivity of cells to wg/wingless-signal stimulation. This increases the amplitude and spatial range of the signaling response to the wg/wingless morphogen gradient, facilitating the precise concentration-dependent regulation of its target genes. Together with Wdr20 and Usp12-46 required for wg/wingless-mediated signaling in the wing imaginal disc and for wg/wingless-dependent regulation of intestinal stem cell proliferation. This is WD repeat-containing protein 48 homolog from Drosophila melanogaster (Fruit fly).